The chain runs to 196 residues: MNEIISTTILLILIMDPLGNLPIFMTILKKLDAKRRRIVVIREMIIALIVMLIFLFVGEKILTILNLKTETVSISGGIILFLIAIKMIFPSDEGNNGTSSEEEPFLVPLAIPLVAGPSLLATLMLLSHQYLHHMPYLVGSLLIAWFFTIIILLLSGLFLKLFGDKGVNALERLMGLILIMLSTQMFLDGIKAWFKN.

A run of 6 helical transmembrane segments spans residues 8 to 28 (TILLILIMDPLGNLPIFMTIL), 45 to 65 (IIALIVMLIFLFVGEKILTIL), 71 to 91 (TVSISGGIILFLIAIKMIFPS), 105 to 125 (FLVPLAIPLVAGPSLLATLML), 134 to 154 (MPYLVGSLLIAWFFTIIILLL), and 174 to 194 (MGLILIMLSTQMFLDGIKAWF).

The protein belongs to the UPF0056 (MarC) family.

The protein localises to the cell membrane. This chain is UPF0056 membrane protein BUsg_434, found in Buchnera aphidicola subsp. Schizaphis graminum (strain Sg).